We begin with the raw amino-acid sequence, 223 residues long: Urease accessory protein UreF (223 aa).

The protein belongs to the UreF family. In terms of assembly, ureD, UreF and UreG form a complex that acts as a GTP-hydrolysis-dependent molecular chaperone, activating the urease apoprotein by helping to assemble the nickel containing metallocenter of UreC. The UreE protein probably delivers the nickel.

It is found in the cytoplasm. Functionally, required for maturation of urease via the functional incorporation of the urease nickel metallocenter. The sequence is that of Urease accessory protein UreF from Rhizobium meliloti (strain 1021) (Ensifer meliloti).